The sequence spans 314 residues: MAATASPGASGMDGKPRTSPKSVKFLFGGLAGMGATVFVQPLDLVKNRMQLSGEGAKTREYKTSFHALISILRAEGLRGIYTGLSAGLLRQATYTTTRLGIYTVLFERLTGADGTPPGFLLKAVIGMTAGATGAFVGTPAEVALIRMTADGRLPVDQRRGYKNVFNALFRIVQEEGVPTLWRGCIPTMARAVVVNAAQLASYSQSKQFLLDSGYFSDNILCHFCASMISGLVTTAASMPVDIVKTRIQNMRMIDGKPEYKNGLDVLVKVVRYEGFFSLWKGFTPYYARLGPHTVLTFIFLEQMNKAYKRLFLSG.

Alanine 2 carries the N-acetylalanine modification. Phosphoserine is present on serine 6. Solcar repeat units lie at residues 23–108 (VKFL…LFER), 117–208 (PGFL…SKQF), and 217–306 (DNIL…MNKA). A helical transmembrane segment spans residues 24-42 (KFLFGGLAGMGATVFVQPL). Residue lysine 57 is modified to N6-succinyllysine. A helical membrane pass occupies residues 83 to 101 (GLSAGLLRQATYTTTRLGI). Phosphotyrosine is present on tyrosine 102. 3 helical membrane passes run 119–140 (FLLK…GTPA), 183–202 (GCIP…LASY), and 222–240 (HFCA…SMPV). Lysine 256 carries the N6-acetyllysine modification. Residues 281–300 (GFTPYYARLGPHTVLTFIFL) form a helical membrane-spanning segment.

This sequence belongs to the mitochondrial carrier (TC 2.A.29) family. As to quaternary structure, interacts with SMIM26. In terms of processing, the N-terminus is blocked. As to expression, heart, liver and brain.

The protein localises to the mitochondrion inner membrane. It catalyses the reaction (S)-malate(in) + 2-oxoglutarate(out) = (S)-malate(out) + 2-oxoglutarate(in). It carries out the reaction malonate(in) + 2-oxoglutarate(out) = malonate(out) + 2-oxoglutarate(in). The catalysed reaction is succinate(in) + 2-oxoglutarate(out) = succinate(out) + 2-oxoglutarate(in). The enzyme catalyses maleate(in) + 2-oxoglutarate(out) = maleate(out) + 2-oxoglutarate(in). It catalyses the reaction oxaloacetate(in) + 2-oxoglutarate(out) = oxaloacetate(out) + 2-oxoglutarate(in). Its function is as follows. Catalyzes the transport of 2-oxoglutarate (alpha-oxoglutarate) across the inner mitochondrial membrane in an electroneutral exchange for malate. Can also exchange 2-oxoglutarate for other dicarboxylic acids such as malonate, succinate, maleate and oxaloacetate, although with lower affinity. Contributes to several metabolic processes, including the malate-aspartate shuttle, the oxoglutarate/isocitrate shuttle, in gluconeogenesis from lactate, and in nitrogen metabolism. Maintains mitochondrial fusion and fission events, and the organization and morphology of cristae. Involved in the regulation of apoptosis. Helps protect from cytotoxic-induced apoptosis by modulating glutathione levels in mitochondria. In Bos taurus (Bovine), this protein is Mitochondrial 2-oxoglutarate/malate carrier protein (SLC25A11).